A 377-amino-acid polypeptide reads, in one-letter code: Guanine nucleotide-binding protein subunit alpha-13 (377 aa).

S-palmitoyl cysteine attachment occurs at residues Cys14 and Cys18. One can recognise a G-alpha domain in the interval 47 to 377; sequence RLVKILLLGA…HDNLKQLMLQ (331 aa). Positions 50 to 63 are G1 motif; sequence KILLLGAGESGKST. GTP-binding positions include 58–63, Ser173, and 197–200; these read ESGKST and LLAR. Mg(2+) is bound at residue Ser62. Residues 195–203 form a G2 motif region; sequence DILLARRPT. Thr203 is a Mg(2+) binding site. At Thr203 the chain carries Phosphothreonine; by PKA. The segment at 218-227 is G3 motif; that stretch reads FKMVDVGGQR. The interval 287–294 is G4 motif; the sequence is ILFLNKTD. GTP-binding positions include 291 to 294 and Ala349; that span reads NKTD. The tract at residues 347–352 is G5 motif; that stretch reads TTAINT.

Belongs to the G-alpha family. G(12) subfamily. In terms of assembly, g proteins are composed of 3 units; alpha, beta and gamma. The alpha chain contains the guanine nucleotide binding site. Interacts with UBXD5. Interacts with HAX1. Interacts (in GTP-bound form) with PPP5C (via TPR repeats); activates PPP5C phosphatase activity and translocates PPP5C to the cell membrane. Interacts with RGS22. Interacts with ARHGEF1. Interacts (in GTP-bound form) with ARHGEF11 (via RGS domain). Interacts (in GTP-bound form) with ARHGEF12 (via RGS domain). Interacts (in GTP-bound form) with CTNND1. Interacts with GAS2L2. Interacts with GPR35. Interacts with GPR174. Post-translationally, palmitoylation is critical for proper membrane localization and signaling. In terms of processing, phosphorylation on Thr-203 by PKA destabilizes the heterotrimer of alpha, beta and gamma, and inhibits Rho activation.

The protein localises to the membrane. The protein resides in the melanosome. It is found in the cytoplasm. Its subcellular location is the nucleus. Guanine nucleotide-binding proteins (G proteins) are involved as modulators or transducers in various transmembrane signaling systems. Activates effector molecule RhoA by binding and activating RhoGEFs (ARHGEF1/p115RhoGEF, ARHGEF11/PDZ-RhoGEF and ARHGEF12/LARG). GNA13-dependent Rho signaling subsequently regulates transcription factor AP-1 (activating protein-1). Promotes tumor cell invasion and metastasis by activating RhoA/ROCK signaling pathway. Inhibits CDH1-mediated cell adhesion in process independent from Rho activation. In lymphoid follicles, transmits P2RY8- and S1PR2-dependent signals that lead to inhibition of germinal center (GC) B cell growth and migration outside the GC niche. The chain is Guanine nucleotide-binding protein subunit alpha-13 (Gna13) from Rattus norvegicus (Rat).